The primary structure comprises 116 residues: Non-specific lipid-transfer protein 10 (116 aa).

The signal sequence occupies residues 1–22 (MMRVVLPLCLLLASIFAWGSEA). 4 disulfide bridges follow: Cys26-Cys73, Cys36-Cys50, Cys51-Cys98, and Cys71-Cys112.

The protein belongs to the plant LTP family.

Functionally, plant non-specific lipid-transfer proteins transfer phospholipids as well as galactolipids across membranes. May play a role in wax or cutin deposition in the cell walls of expanding epidermal cells and certain secretory tissues. The polypeptide is Non-specific lipid-transfer protein 10 (LTP10) (Arabidopsis thaliana (Mouse-ear cress)).